The sequence spans 313 residues: MTRPIAVIGPTATGKSALALELAERLGGEIVNADAMQLYRGMDIGTAKVPECERRGLVHHMLDVLDVTETATVATYQERAVATIDDIRARGHVPVIVGGSMMYIQALLDDWAFPATDPQVRARWEERLAQIGVTALHAELAARDPAAAAIILPTDGRRTVRALEVIELTGQPFAASAPTIGPPRWDTLIVGLDWETEKLDDRIARRTDLMFEQGFVGEVEYLLSTGLRDGVTASRAIGYAQVIAALDAGGGAGALAQARDLTFVGTRRYVRRQRSWFGRDHRVVWLAGESVETGGPEGLAGEIVSRWRLSSNT.

9 to 16 (GPTATGKS) lines the ATP pocket. 11–16 (TATGKS) lines the substrate pocket.

This sequence belongs to the IPP transferase family. Monomer. Mg(2+) is required as a cofactor.

The enzyme catalyses adenosine(37) in tRNA + dimethylallyl diphosphate = N(6)-dimethylallyladenosine(37) in tRNA + diphosphate. Functionally, catalyzes the transfer of a dimethylallyl group onto the adenine at position 37 in tRNAs that read codons beginning with uridine, leading to the formation of N6-(dimethylallyl)adenosine (i(6)A). In Mycobacteroides abscessus (strain ATCC 19977 / DSM 44196 / CCUG 20993 / CIP 104536 / JCM 13569 / NCTC 13031 / TMC 1543 / L948) (Mycobacterium abscessus), this protein is tRNA dimethylallyltransferase.